The chain runs to 159 residues: Cystatin-9 (159 aa).

Residues 1–28 form the signal peptide; the sequence is MSSPQRRKAMPWALSLLLMGFQLLVTYA.

Belongs to the cystatin family. In terms of tissue distribution, expressed in heart, placenta, lung, liver, skeletal muscle and pancreas. Not expressed in brain. Expressed in epididymis, kidney, testis, spinal cord, and thymus with a strong expression in epididymis and kidney and a weak expression in the spinal cord and thymus.

It localises to the secreted. Its function is as follows. May be involved in testis development. May play a role in hematopoietic differentiation or inflammation. Has immunomodulatory and antimicrobial functions against Francisella tularensis, a Gram-negative bacteria. The polypeptide is Cystatin-9 (CST9) (Homo sapiens (Human)).